The following is a 371-amino-acid chain: Queuine tRNA-ribosyltransferase (371 aa).

Residue D89 is the Proton acceptor of the active site. Substrate is bound by residues 89 to 93 (DSGGF), D143, Q185, and G212. Residues 243–249 (GVGKPED) are RNA binding. Residue D262 is the Nucleophile of the active site. Positions 267–271 (TRNAR) are RNA binding; important for wobble base 34 recognition. Residues C300, C302, C305, and H331 each contribute to the Zn(2+) site.

This sequence belongs to the queuine tRNA-ribosyltransferase family. As to quaternary structure, homodimer. Within each dimer, one monomer is responsible for RNA recognition and catalysis, while the other monomer binds to the replacement base PreQ1. The cofactor is Zn(2+).

The catalysed reaction is 7-aminomethyl-7-carbaguanine + guanosine(34) in tRNA = 7-aminomethyl-7-carbaguanosine(34) in tRNA + guanine. It functions in the pathway tRNA modification; tRNA-queuosine biosynthesis. Its function is as follows. Catalyzes the base-exchange of a guanine (G) residue with the queuine precursor 7-aminomethyl-7-deazaguanine (PreQ1) at position 34 (anticodon wobble position) in tRNAs with GU(N) anticodons (tRNA-Asp, -Asn, -His and -Tyr). Catalysis occurs through a double-displacement mechanism. The nucleophile active site attacks the C1' of nucleotide 34 to detach the guanine base from the RNA, forming a covalent enzyme-RNA intermediate. The proton acceptor active site deprotonates the incoming PreQ1, allowing a nucleophilic attack on the C1' of the ribose to form the product. After dissociation, two additional enzymatic reactions on the tRNA convert PreQ1 to queuine (Q), resulting in the hypermodified nucleoside queuosine (7-(((4,5-cis-dihydroxy-2-cyclopenten-1-yl)amino)methyl)-7-deazaguanosine). The protein is Queuine tRNA-ribosyltransferase of Azotobacter vinelandii (strain DJ / ATCC BAA-1303).